A 451-amino-acid chain; its full sequence is Nucleoprotein (451 aa).

The tract at residues 1-57 (MSFVPGQENAGSRSSSGNRAGNGILKKTTWADQTERGNRGRRNHPKQTATTQPNAGS) is disordered. Over residues 9–23 (NAGSRSSSGNRAGNG) the composition is skewed to low complexity. Over residues 46–55 (KQTATTQPNA) the composition is skewed to polar residues. The interval 52 to 193 (QPNAGSVVPH…GFYVEGSGRS (142 aa)) is RNA-binding. The CoV N NTD domain occupies 60–189 (PHYSWFSGIT…VLPQGFYVEG (130 aa)). RNA contacts are provided by Arg-105, Arg-121, and Arg-163. 3 disordered regions span residues 155 to 227 (KTTA…AVKP), 266 to 288 (KPRQ…KRGP), and 379 to 423 (AGSV…VSRE). Ser-166 carries the phosphoserine; by host modification. A Phosphothreonine; by host modification is found at Thr-173. Over residues 189–208 (GSGRSAPASRSGSRSQSRGP) the composition is skewed to low complexity. The residue at position 190 (Ser-190) is a Phosphoserine; by host. The segment covering 211 to 221 (RARSSSNQRQP) has biased composition (polar residues). The 124-residue stretch at 256–379 (AKEVRQKILT…ENLNAYQDQA (124 aa)) folds into the CoV N CTD domain. A dimerization region spans residues 263 to 380 (ILTKPRQKRT…NLNAYQDQAG (118 aa)). A phosphoserine; by host mark is found at Ser-386 and Ser-421. A Phosphothreonine; by host modification is found at Thr-425.

Belongs to the betacoronavirus nucleocapsid protein family. As to quaternary structure, homooligomer. Both monomeric and oligomeric forms interact with RNA. Interacts with protein M. Interacts with NSP3; this interaction serves to tether the genome to the newly translated replicase-transcriptase complex at a very early stage of infection. ADP-ribosylated. The ADP-ribosylation is retained in the virion during infection. Post-translationally, phosphorylated on serine and threonine residues.

The protein resides in the virion. It is found in the host endoplasmic reticulum-Golgi intermediate compartment. It localises to the host Golgi apparatus. Packages the positive strand viral genome RNA into a helical ribonucleocapsid (RNP) and plays a fundamental role during virion assembly through its interactions with the viral genome and membrane protein M. Plays an important role in enhancing the efficiency of subgenomic viral RNA transcription as well as viral replication. The sequence is that of Nucleoprotein from Murine coronavirus (strain 2) (MHV-2).